A 446-amino-acid polypeptide reads, in one-letter code: Tubulin alpha chain-like 3 (446 aa).

An MREC motif motif is present at residues 1–4 (MREC). 8 residues coordinate GTP: Gln-11, Glu-78, Ser-147, Gly-151, Thr-152, Thr-186, Asn-213, and Asn-235. Glu-78 provides a ligand contact to Mg(2+). Glu-261 is a catalytic residue.

The protein belongs to the tubulin family. In terms of assembly, dimer of alpha and beta chains. A typical microtubule is a hollow water-filled tube with an outer diameter of 25 nm and an inner diameter of 15 nM. Alpha-beta heterodimers associate head-to-tail to form protofilaments running lengthwise along the microtubule wall with the beta-tubulin subunit facing the microtubule plus end conferring a structural polarity. Microtubules usually have 13 protofilaments but different protofilament numbers can be found in some organisms and specialized cells. The cofactor is Mg(2+). Some glutamate residues at the C-terminus are polyglycylated, resulting in polyglycine chains on the gamma-carboxyl group. Glycylation is mainly limited to tubulin incorporated into axonemes (cilia and flagella) whereas glutamylation is prevalent in neuronal cells, centrioles, axonemes, and the mitotic spindle. Both modifications can coexist on the same protein on adjacent residues, and lowering polyglycylation levels increases polyglutamylation, and reciprocally. Cilia and flagella glycylation is required for their stability and maintenance. Flagella glycylation controls sperm motility. In terms of processing, some glutamate residues at the C-terminus are polyglutamylated, resulting in polyglutamate chains on the gamma-carboxyl group. Polyglutamylation plays a key role in microtubule severing by spastin (SPAST). SPAST preferentially recognizes and acts on microtubules decorated with short polyglutamate tails: severing activity by SPAST increases as the number of glutamates per tubulin rises from one to eight, but decreases beyond this glutamylation threshold. Glutamylation is also involved in cilia motility.

The protein localises to the cytoplasm. It localises to the cytoskeleton. The enzyme catalyses GTP + H2O = GDP + phosphate + H(+). Functionally, tubulin is the major constituent of microtubules, a cylinder consisting of laterally associated linear protofilaments composed of alpha- and beta-tubulin heterodimers. Microtubules grow by the addition of GTP-tubulin dimers to the microtubule end, where a stabilizing cap forms. Below the cap, tubulin dimers are in GDP-bound state, owing to GTPase activity of alpha-tubulin. This Mus musculus (Mouse) protein is Tubulin alpha chain-like 3 (Tubal3).